The following is a 261-amino-acid chain: Cytochrome c oxidase subunit 3 (261 aa).

The Mitochondrial matrix segment spans residues 1-15; it reads MAHQAHAYHMVDPSP. A helical membrane pass occupies residues 16-34; it reads WPLTGAVAALLLTSGLAIW. Residues 35-40 are Mitochondrial intermembrane-facing; that stretch reads FPFNSL. The chain crosses the membrane as a helical span at residues 41–66; the sequence is ILLTLGLVLLLLTMYQWWRDIVREGT. Topologically, residues 67–72 are mitochondrial matrix; sequence FQGHHT. A helical transmembrane segment spans residues 73 to 105; that stretch reads PPVQKGLRYGMILFITSEVFFFLGFFWAFYHSS. Topologically, residues 106 to 128 are mitochondrial intermembrane; the sequence is LAPTPELGGCWPPTGIVPLNPFE. Residues 129 to 152 form a helical membrane-spanning segment; the sequence is VPLLNTAVLLASGVTVTWAHHSIM. Residues 153–155 are Mitochondrial matrix-facing; it reads EGE. Residues 156-183 form a helical membrane-spanning segment; it reads RKQAIHSLTLTILLGFYFTFLQAMEYYE. The Mitochondrial intermembrane segment spans residues 184 to 190; the sequence is APFTIAD. The helical transmembrane segment at 191–223 threads the bilayer; sequence GVYGSTFFVATGFHGLHVIIGSTFLAICLLRQI. Over 224-232 the chain is Mitochondrial matrix; it reads RYHFTSEHH. A helical membrane pass occupies residues 233–256; sequence FGFEAAAWYWHFVDVVWLFLYISI. The Mitochondrial intermembrane portion of the chain corresponds to 257–261; the sequence is YWWGS.

Belongs to the cytochrome c oxidase subunit 3 family. Component of the cytochrome c oxidase (complex IV, CIV), a multisubunit enzyme composed of 14 subunits. The complex is composed of a catalytic core of 3 subunits MT-CO1, MT-CO2 and MT-CO3, encoded in the mitochondrial DNA, and 11 supernumerary subunits COX4I, COX5A, COX5B, COX6A, COX6B, COX6C, COX7A, COX7B, COX7C, COX8 and NDUFA4, which are encoded in the nuclear genome. The complex exists as a monomer or a dimer and forms supercomplexes (SCs) in the inner mitochondrial membrane with NADH-ubiquinone oxidoreductase (complex I, CI) and ubiquinol-cytochrome c oxidoreductase (cytochrome b-c1 complex, complex III, CIII), resulting in different assemblies (supercomplex SCI(1)III(2)IV(1) and megacomplex MCI(2)III(2)IV(2)).

The protein resides in the mitochondrion inner membrane. The enzyme catalyses 4 Fe(II)-[cytochrome c] + O2 + 8 H(+)(in) = 4 Fe(III)-[cytochrome c] + 2 H2O + 4 H(+)(out). Functionally, component of the cytochrome c oxidase, the last enzyme in the mitochondrial electron transport chain which drives oxidative phosphorylation. The respiratory chain contains 3 multisubunit complexes succinate dehydrogenase (complex II, CII), ubiquinol-cytochrome c oxidoreductase (cytochrome b-c1 complex, complex III, CIII) and cytochrome c oxidase (complex IV, CIV), that cooperate to transfer electrons derived from NADH and succinate to molecular oxygen, creating an electrochemical gradient over the inner membrane that drives transmembrane transport and the ATP synthase. Cytochrome c oxidase is the component of the respiratory chain that catalyzes the reduction of oxygen to water. Electrons originating from reduced cytochrome c in the intermembrane space (IMS) are transferred via the dinuclear copper A center (CU(A)) of subunit 2 and heme A of subunit 1 to the active site in subunit 1, a binuclear center (BNC) formed by heme A3 and copper B (CU(B)). The BNC reduces molecular oxygen to 2 water molecules using 4 electrons from cytochrome c in the IMS and 4 protons from the mitochondrial matrix. The chain is Cytochrome c oxidase subunit 3 (mt-co3) from Tetraodon nigroviridis (Spotted green pufferfish).